An 881-amino-acid chain; its full sequence is Rho GTPase-activating protein 17 (881 aa).

The region spanning 14–246 (QTVGRAEKTE…MRAHQDKWAE (233 aa)) is the BAR domain. Positions 252-442 (TPLEEHLKRS…PIIQHADWFF (191 aa)) constitute a Rho-GAP domain. Positions 459–475 (TPSSNHSFHTGNDSDSG) are enriched in polar residues. Residues 459-482 (TPSSNHSFHTGNDSDSGTLERKRP) are disordered. A phosphoserine mark is found at Ser-484 and Ser-575. Residues 511-881 (GGTLNRKHIS…IDNDTESTAL (371 aa)) form a disordered region. A compositionally biased stretch (polar residues) spans 592–617 (RNNSQIASGQNQPQAAAGSHQLSMGQ). Residues 637–650 (APAPPKPGNPPPGH) show a composition bias toward pro residues. Low complexity predominate over residues 653–664 (GQSSSGTSQHPP). The span at 665-678 (SLSPKPPTRSPSPP) shows a compositional bias: pro residues. Phosphothreonine is present on residues Thr-679 and Thr-682. The segment covering 679–698 (TQHTGQPPGQPSAPSQLSAP) has biased composition (low complexity). A phosphoserine mark is found at Ser-702 and Ser-704. Pro residues-rich tracts occupy residues 712–721 (NHPPPQPPTQ), 752–764 (HTPP…PSTP), and 806–816 (RPSVPPPPQPP). Residues Thr-753, Thr-757, and Thr-759 each carry the phosphothreonine modification. The SH3-binding signature appears at 753 to 766 (TPPQTPTPPSTPPL). Phosphoserine is present on Ser-762. A Phosphothreonine modification is found at Thr-763. Residues 822 to 844 (GDSSLTNTAPTASKIVTDSNSRV) show a composition bias toward polar residues. The segment covering 845–865 (SEPHRSIFPEMHSDSASKDVP) has biased composition (basic and acidic residues). The span at 872-881 (IDNDTESTAL) shows a compositional bias: acidic residues.

As to quaternary structure, component of a complex whose core is composed of ARHGAP17, AMOT, PALS1, PATJ and PARD3/PAR3. Interacts with NHERF1, FNBP1, TRIP10, CAPZA (CAPZA1, CAPZA2 or CAPZA3), CAPZB, CD2AP and SH3KBP1/CIN85. In terms of tissue distribution, ubiquitously expressed. Expressed at higher level in heart and placenta.

It localises to the membrane. It is found in the cytoplasm. The protein localises to the cell junction. Its subcellular location is the tight junction. Its function is as follows. Rho GTPase-activating protein involved in the maintenance of tight junction by regulating the activity of CDC42, thereby playing a central role in apical polarity of epithelial cells. Specifically acts as a GTPase activator for the CDC42 GTPase by converting it to an inactive GDP-bound state. The complex formed with AMOT acts by regulating the uptake of polarity proteins at tight junctions, possibly by deciding whether tight junction transmembrane proteins are recycled back to the plasma membrane or sent elsewhere. Participates in the Ca(2+)-dependent regulation of exocytosis, possibly by catalyzing GTPase activity of Rho family proteins and by inducing the reorganization of the cortical actin filaments. Acts as a GTPase activator in vitro for RAC1. This chain is Rho GTPase-activating protein 17 (ARHGAP17), found in Homo sapiens (Human).